The sequence spans 134 residues: Transcription antitermination protein NusB (134 aa).

Belongs to the NusB family.

Its function is as follows. Involved in transcription antitermination. Required for transcription of ribosomal RNA (rRNA) genes. Binds specifically to the boxA antiterminator sequence of the ribosomal RNA (rrn) operons. In Halalkalibacterium halodurans (strain ATCC BAA-125 / DSM 18197 / FERM 7344 / JCM 9153 / C-125) (Bacillus halodurans), this protein is Transcription antitermination protein NusB.